Here is a 165-residue protein sequence, read N- to C-terminus: Probable chemoreceptor glutamine deamidase CheD (165 aa).

It belongs to the CheD family.

The catalysed reaction is L-glutaminyl-[protein] + H2O = L-glutamyl-[protein] + NH4(+). Probably deamidates glutamine residues to glutamate on methyl-accepting chemotaxis receptors (MCPs), playing an important role in chemotaxis. This is Probable chemoreceptor glutamine deamidase CheD from Clostridium tetani (strain Massachusetts / E88).